Reading from the N-terminus, the 599-residue chain is Elongation factor 4 (599 aa).

In terms of domain architecture, tr-type G spans 5 to 187 (SHIRNFSIIA…RLVTVIPAPE (183 aa)). Residues 17–22 (DHGKST) and 134–137 (NKMD) each bind GTP.

Belongs to the TRAFAC class translation factor GTPase superfamily. Classic translation factor GTPase family. LepA subfamily.

The protein resides in the cell inner membrane. It catalyses the reaction GTP + H2O = GDP + phosphate + H(+). Its function is as follows. Required for accurate and efficient protein synthesis under certain stress conditions. May act as a fidelity factor of the translation reaction, by catalyzing a one-codon backward translocation of tRNAs on improperly translocated ribosomes. Back-translocation proceeds from a post-translocation (POST) complex to a pre-translocation (PRE) complex, thus giving elongation factor G a second chance to translocate the tRNAs correctly. Binds to ribosomes in a GTP-dependent manner. The polypeptide is Elongation factor 4 (Pseudomonas paraeruginosa (strain DSM 24068 / PA7) (Pseudomonas aeruginosa (strain PA7))).